The primary structure comprises 688 residues: Polyphosphate kinase (688 aa).

N45 lines the ATP pocket. Mg(2+) contacts are provided by R375 and R405. One can recognise a PLD phosphodiesterase domain in the interval 430–464 (PGLKIHAKLFLISRKENGEVVRYAHIGTGNFNEKT). The active-site Phosphohistidine intermediate is the H435. 3 residues coordinate ATP: Y468, R564, and H592.

The protein belongs to the polyphosphate kinase 1 (PPK1) family. Mg(2+) serves as cofactor. In terms of processing, an intermediate of this reaction is the autophosphorylated ppk in which a phosphate is covalently linked to a histidine residue through a N-P bond.

It carries out the reaction [phosphate](n) + ATP = [phosphate](n+1) + ADP. In terms of biological role, catalyzes the reversible transfer of the terminal phosphate of ATP to form a long-chain polyphosphate (polyP). This chain is Polyphosphate kinase, found in Escherichia coli O157:H7.